A 1353-amino-acid polypeptide reads, in one-letter code: Ankyrin repeat domain-containing protein 36B (1353 aa).

ANK repeat units follow at residues 19 to 48 (YHLK…DANK), 52 to 81 (KERT…ELNL), 85 to 114 (EDRT…DPNI), 118 to 147 (FGRT…NIEE), 151 to 180 (NEYQ…NVNA), and 184 to 213 (LGRS…DVFS). 2 disordered regions span residues 249 to 307 (PINS…KDSV) and 349 to 607 (MGGG…KATS). Residues 250 to 259 (INSNPVSPQK) show a composition bias toward polar residues. Composition is skewed to basic and acidic residues over residues 260–272 (QRAE…DKDS) and 295–306 (PAEKATSDEKDS). Polar residues-rich tracts occupy residues 355–367 (GTVS…ASKT) and 389–400 (GTVSSQKQQALK). Composition is skewed to basic and acidic residues over residues 436–455 (TSDE…DGEI) and 471–491 (SVKE…EKSR). Residues 579–600 (VSNIPTEIKDGQQSGTVSSQKQ) are compositionally biased toward polar residues. 4 coiled-coil regions span residues 731–762 (AEQD…QIHS), 821–908 (IKLK…YRIE), 937–1055 (SETD…DHDQ), and 1119–1344 (VFEH…LQHS).

It belongs to the ANKRD36 family.

The protein is Ankyrin repeat domain-containing protein 36B (ANKRD36B) of Homo sapiens (Human).